Reading from the N-terminus, the 773-residue chain is Angiomotin-like protein 2 (773 aa).

Disordered stretches follow at residues 41–157, 169–238, and 259–309; these read GGAG…HVRS, RNGA…SPHF, and QYQY…LAQM. 3 stretches are compositionally biased toward basic and acidic residues: residues 80–91, 100–112, and 141–152; these read QGGETHLAENRL, KGEE…EAKA, and RRQDEALRELRH. The segment at 101–302 is required for interaction with CDH5; sequence GEELPTYEEA…GPPGAQATSG (202 aa). Tyr107 is subject to Phosphotyrosine; by FGFR1. The span at 177 to 190 shows a compositional bias: polar residues; it reads HMSSSHSFPQLARS. Over residues 196–213 the composition is skewed to pro residues; it reads PRGPPAEGPEPRGPPPQY. Residues 220–302 are required for interaction with CDH1; sequence QETAAVNDPR…GPPGAQATSG (83 aa). Residues 304-577 are a coiled coil; the sequence is AHLAQMESVL…KYLEERAMRQ (274 aa). Glycyl lysine isopeptide (Lys-Gly) (interchain with G-Cter in ubiquitin) cross-links involve residues Lys342 and Lys403. Disordered regions lie at residues 589-611 and 677-754; these read QRDT…NEGL and WQGF…TTSL. Residues 701 to 710 show a composition bias toward pro residues; the sequence is EEPPATPPLP. A compositionally biased stretch (polar residues) spans 719–734; it reads DGSTQTDGPADSTSAC. Ser753 and Ser756 each carry phosphoserine. A PDZ-binding motif is present at residues 770 to 773; it reads EILI.

The protein belongs to the angiomotin family. Part of a complex composed of AMOTL2, MAGI1 and CDH5, within the complex AMOTL2 acts as a scaffold protein for the interaction of MAGI1 with CDH5. The complex is required for coupling actin fibers to cell junctions in endothelial cells. Within the complex AMOTL2 (via its N-terminus) interacts with CDH5. Interacts (via N-terminus) with MAGI1. Interacts (via N-terminus) with ACTB; the interaction facilitates binding of cell junction complexes to actin fibers in endothelial cells. Interacts with CDH1; the interaction may facilitate binding of radial actin fibers to cell junction complexes. Interacts with SRC. Interacts with YAP1; the interaction is required for ubiquitination of AMOTL2 and localization of YAP1 to tight junctions. Interacts with WWP1; the interaction facilitates WWP1 interaction with the Crumbs complex and subsequent WWP1 translocation to the plasma membrane. WWP1 interaction with the Crumbs complex promotes WWP1 monoubiquitination of AMOTL2 which subsequently activates the Hippo signaling pathway. When ubiquitinated interacts with LATS2 (via UBA domain); the interaction promotes LATS2 phosphorylation of YAP1. Interacts (via PPXY motif) with WWTR1/TAZ (via WW domain); the interaction promotes WWTR1/TAZ localization to the cytoplasm and thereby inhibition of its transcriptional properties. Interacts with PHLDB2; interaction may facilitate PHLDB2 localization to the myotube podosome cortex that surrounds the core. Monoubiquitinated at Lys-342 and Lys-403 by Crumbs complex-bound WWP1. De-ubiquitinated at Lys-342 and Lys-403 by USP9X; the interaction may be promoted by cell contact inhibition. Deubiquitination of AMOTL2 negatively regulates Hippo signaling activation. Post-translationally, phosphorylation at Tyr-107 is necessary for efficient binding to SRC and synergistically functioning with SRC to activate the downstream MAPK pathway.

The protein localises to the recycling endosome. The protein resides in the cytoplasm. Its subcellular location is the cell projection. It is found in the podosome. It localises to the cell junction. Functionally, regulates the translocation of phosphorylated SRC to peripheral cell-matrix adhesion sites. Required for proper architecture of actin filaments. Plays a role in coupling actin fibers to cell junctions in endothelial cells and is therefore required for correct endothelial cell morphology via facilitating transcellular transmission of mechanical force resulting in endothelial cell elongation. Required for the anchoring of radial actin fibers to CDH1 junction complexes at the cell membrane which facilitates organization of radial actin fiber structure and cellular response to contractile forces. This contributes to maintenance of cell area, size, shape, epithelial sheet organization and trophectoderm cell properties that facilitate blastocyst zona hatching. Inhibits the Wnt/beta-catenin signaling pathway, probably by recruiting CTNNB1 to recycling endosomes and hence preventing its translocation to the nucleus. Participates in angiogenesis. Activates the Hippo signaling pathway in response to cell contact inhibition via interaction with and ubiquitination by Crumbs complex-bound WWP1. Ubiquitinated AMOTL2 then interacts with LATS2 which in turn phosphorylates YAP1, excluding it from the nucleus and localizing it to the cytoplasm and tight junctions, therefore ultimately repressing YAP1-driven transcription of target genes. Acts to inhibit WWTR1/TAZ transcriptional coactivator activity via sequestering WWTR1/TAZ in the cytoplasm and at tight junctions. Regulates the size and protein composition of the podosome cortex and core at myofibril neuromuscular junctions. Selectively promotes FGF-induced MAPK activation through SRC. May play a role in the polarity, proliferation and migration of endothelial cells. This Rattus norvegicus (Rat) protein is Angiomotin-like protein 2.